The primary structure comprises 613 residues: Zinc metalloproteinase-disintegrin-like EoVMP2 (613 aa).

Residues 1 to 20 form the signal peptide; it reads MMQVLLVTICLAVFPYQGSS. The propeptide occupies 21 to 194; sequence IILESGNVND…EASQLFATSE (174 aa). Gln195 carries the post-translational modification Pyrrolidone carboxylic acid. The Peptidase M12B domain occupies 201–397; the sequence is RYIEFFIVVD…RNPKCMINKP (197 aa). Residue Glu204 participates in Ca(2+) binding. Asn219 is a glycosylation site (N-linked (GlcNAc...) asparagine). Asp288 serves as a coordination point for Ca(2+). Disulfide bonds link Cys312–Cys392, Cys352–Cys376, and Cys354–Cys359. His337 is a binding site for Zn(2+). Residue Glu338 is part of the active site. Residues His341 and His347 each coordinate Zn(2+). Asn375 is a glycosylation site (N-linked (GlcNAc...) asparagine). The Ca(2+) site is built by Cys392, Asn395, Val407, Asn410, Leu412, Glu414, Glu417, and Asp420. Residues 405-491 form the Disintegrin domain; that stretch reads PPVCGNGLLE…DCPIDGFHAN (87 aa). 14 disulfide bridges follow: Cys408–Cys437, Cys419–Cys432, Cys421–Cys427, Cys431–Cys454, Cys445–Cys451, Cys450–Cys476, Cys463–Cys483, Cys470–Cys502, Cys495–Cys507, Cys514–Cys564, Cys529–Cys575, Cys542–Cys552, Cys559–Cys601, and Cys595–Cys606. Positions 469-471 match the D/ECD-tripeptide motif; sequence DCD.

The protein belongs to the venom metalloproteinase (M12B) family. P-III subfamily. P-IIIa sub-subfamily. As to quaternary structure, monomer. Zn(2+) serves as cofactor. In terms of tissue distribution, expressed by the venom gland.

Its subcellular location is the secreted. Its function is as follows. Snake venom zinc metalloprotease that possesses high hemorrhagic activity. It inhibits collagen-induced platelet aggregation and activates prothrombin (F2). This is Zinc metalloproteinase-disintegrin-like EoVMP2 (Svmp3-Eoc22) from Echis ocellatus (Ocellated saw-scaled viper).